The sequence spans 1458 residues: Probable serine/threonine-protein kinase yakA (1458 aa).

Residues 32 to 76 are compositionally biased toward low complexity; that stretch reads NNSLNSNDNTNTTNNNNNNNNNNNNNNNNNNNNNNNNNINNNNNN. Positions 32 to 83 are disordered; the sequence is NNSLNSNDNTNTTNNNNNNNNNNNNNNNNNNNNNNNNNINNNNNNGGMVGVN. Residues 205 to 548 form the Protein kinase domain; sequence YKVLDSLGQG…PMQAKEHPFI (344 aa). ATP-binding positions include 211–219 and lysine 234; that span reads LGQGTFGQV. Aspartate 332 serves as the catalytic Proton acceptor. Disordered regions lie at residues 441–462 and 545–571; these read HRHL…NGKP and HPFI…TYSQ. The segment covering 446-459 has biased composition (low complexity); sequence SNSDDNNNNNNNNN. Residues 588–643 adopt a coiled-coil conformation; the sequence is NQHQLFQQLQQQQQQQQQQQQQQQQQQQQQQQQQQQQQQHNQFQQQQQQQQQQQQS. 4 stretches are compositionally biased toward low complexity: residues 659 to 709, 791 to 800, 808 to 853, and 861 to 870; these read TPYT…SFNF, SWGSDSSSIS, QKQM…NNVN, and DIPSDSFSSS. 2 disordered regions span residues 659-714 and 791-874; these read TPYT…NESF and SWGS…EGMD. The stretch at 878 to 927 forms a coiled coil; the sequence is NLYQQQQQQQQQQQQQQQQQQQQQQQQQQQQQQQQQQLQYQQQFQTLQDL. Disordered stretches follow at residues 930-1095, 1128-1161, 1233-1347, 1375-1399, and 1435-1458; these read EGEK…PQMI, NQQN…GGAI, DYRP…SYQY, QQQQ…KTSS, and QQLQ…YRET. 3 stretches are compositionally biased toward low complexity: residues 961–988, 1016–1042, and 1064–1093; these read QQTN…QQQQ, QQFQ…RFMQ, and QPLH…FTPQ. 2 stretches are compositionally biased toward polar residues: residues 1128-1158 and 1233-1245; these read NQQN…NSSG and DYRP…QSPP. Low complexity-rich tracts occupy residues 1246-1255 and 1264-1279; these read SSYNSNKSFY and NNNN…NFSN. Over residues 1280–1291 the composition is skewed to polar residues; the sequence is SLLPSQQQNVIF. Low complexity predominate over residues 1292-1309; the sequence is PQNSPPSSYNSSNSLSKS. 2 stretches are compositionally biased toward polar residues: residues 1310–1321 and 1331–1344; these read GGNTVKNNSNTG and QRFN…SGGS. Coiled-coil stretches lie at residues 1346–1383 and 1409–1442; these read QYQQ…KKDT and RYQY…QQQA.

It belongs to the protein kinase superfamily. CMGC Ser/Thr protein kinase family. MNB/DYRK subfamily.

Its subcellular location is the cytoplasm. It catalyses the reaction L-seryl-[protein] + ATP = O-phospho-L-seryl-[protein] + ADP + H(+). It carries out the reaction L-threonyl-[protein] + ATP = O-phospho-L-threonyl-[protein] + ADP + H(+). The catalysed reaction is L-tyrosyl-[protein] + ATP = O-phospho-L-tyrosyl-[protein] + ADP + H(+). In terms of biological role, general sensor of environmental conditions, such as heat stress, effecting changes through pkaC. Essential for survival to nitrosoative and oxidative stresses. Required for cell cycle control, not only at the onset but also during development (aggregation process and postaggregative development). The protein is Probable serine/threonine-protein kinase yakA (yakA) of Dictyostelium discoideum (Social amoeba).